The sequence spans 155 residues: MRLRLIAVGSRMPKWVEEGWHEYAKRMPSELALELVEIPLNTRGKNADVARFIRQEGEAMLAKVQPGERIVTLEVQGKPWSTEQLAVELDRWRLDARTVNLMVGGPEGLAPEVCARSEQRWSLSPLTLPHPLVRILIGEQMYRAWTVLSGHPYHK.

S-adenosyl-L-methionine contacts are provided by residues leucine 73, glycine 104, and 123-128; that span reads LSPLTL.

It belongs to the RNA methyltransferase RlmH family. Homodimer.

It localises to the cytoplasm. The catalysed reaction is pseudouridine(1915) in 23S rRNA + S-adenosyl-L-methionine = N(3)-methylpseudouridine(1915) in 23S rRNA + S-adenosyl-L-homocysteine + H(+). Functionally, specifically methylates the pseudouridine at position 1915 (m3Psi1915) in 23S rRNA. The protein is Ribosomal RNA large subunit methyltransferase H of Pseudomonas syringae pv. tomato (strain ATCC BAA-871 / DC3000).